The chain runs to 292 residues: Elongation factor Ts (292 aa).

The segment at 80-83 (TDFV) is involved in Mg(2+) ion dislocation from EF-Tu.

Belongs to the EF-Ts family.

Its subcellular location is the cytoplasm. Associates with the EF-Tu.GDP complex and induces the exchange of GDP to GTP. It remains bound to the aminoacyl-tRNA.EF-Tu.GTP complex up to the GTP hydrolysis stage on the ribosome. In Mycoplasmopsis synoviae (strain 53) (Mycoplasma synoviae), this protein is Elongation factor Ts.